Consider the following 407-residue polypeptide: Phosphonoacetate hydrolase (407 aa).

Positions 25, 64, 202, 206, 241, 242, and 368 each coordinate Zn(2+). Residues T64 and D202 each coordinate substrate. Positions 242 and 368 each coordinate substrate.

It belongs to the alkaline phosphatase family. PhnA subfamily. As to quaternary structure, homodimer. It depends on Zn(2+) as a cofactor.

The catalysed reaction is phosphonoacetate + H2O = acetate + phosphate + H(+). Its activity is regulated as follows. Completely inhibited by EDTA and 1,10-phenanthroline. Moderately inhibited by the phosphonocarboxylic acids phosphonoformate and 3-phosphonopropionate and the phosphonate herbicide glyphosate. Partially inhibited by the reducing agents sodium sulfide and dithiotheitol and the chelating agent iminodiacetate. Nonphosphonate analogs of phosphonoacetate, such as arsonoacetate, sulfonoacetate and malonate are poor inhibitors. Inorganic phosphate, acetate and the known phosphonotase inhibitor phosphite have little effect on activity. Not inhibited by the alkylphosphonic acids methylphosphonate and ethylphosphonate, or the aminoalkylphosphonates 2-aminoethylphosphonate, 3-aminopropylphosphonate and 4-aminobutylphosphonate. Fe(3+), Ca(2+), Mg(2+) and Cs(+) have no effect on activity. Activity is slightly increased by the aminoalkylphosphonates 1-aminoethylphosphonate, 1-aminobutylphosphonate, 2-amino-4-butylphosphonate. Activity is increased by Zn(2+), Mn(2+) and Co(2+), these 3 metal ions also allow recovery of activity after EDTA treatment. In terms of biological role, specifically hydrolyzes phosphonoacetate. Does not have activity on other organophosphonates or acetates. The polypeptide is Phosphonoacetate hydrolase (Pseudomonas fluorescens).